Here is a 74-residue protein sequence, read N- to C-terminus: Protein SlyX homolog (74 aa).

Belongs to the SlyX family.

The sequence is that of Protein SlyX homolog from Neisseria meningitidis serogroup C (strain 053442).